The sequence spans 86 residues: Exodeoxyribonuclease 7 small subunit (86 aa).

The protein belongs to the XseB family. Heterooligomer composed of large and small subunits.

The protein resides in the cytoplasm. The enzyme catalyses Exonucleolytic cleavage in either 5'- to 3'- or 3'- to 5'-direction to yield nucleoside 5'-phosphates.. Functionally, bidirectionally degrades single-stranded DNA into large acid-insoluble oligonucleotides, which are then degraded further into small acid-soluble oligonucleotides. The protein is Exodeoxyribonuclease 7 small subunit of Xanthomonas euvesicatoria pv. vesicatoria (strain 85-10) (Xanthomonas campestris pv. vesicatoria).